The chain runs to 117 residues: MTRAKSGKISKKRHKKILKLAKGYRGRANNCFRVAIEKVEKGLQYAYRDRRNRKRDFRGLWIQRINAAVREHGLIYSQFMGALKKAGINIDRKVLAELAVNNNDGFASIVQQSKAHI.

It belongs to the bacterial ribosomal protein bL20 family.

In terms of biological role, binds directly to 23S ribosomal RNA and is necessary for the in vitro assembly process of the 50S ribosomal subunit. It is not involved in the protein synthesizing functions of that subunit. The polypeptide is Large ribosomal subunit protein bL20 (rplT) (Rickettsia prowazekii (strain Madrid E)).